The chain runs to 576 residues: Nuclear receptor subfamily 1 group D member 2 (576 aa).

The required for phosphorylation by CSNK1E and cytoplasmic localization stretch occupies residues 1–60 (MELNAGGVIAYISSSSSASSPASCHSEGSENSFQSSSSSVPSSPNSSNCDANGNPKNADI). Residues 1–99 (MELNAGGVIA…HSGMTKFSGM (99 aa)) are modulating. Over residues 13-47 (SSSSSASSPASCHSEGSENSFQSSSSSVPSSPNSS) the composition is skewed to low complexity. A disordered region spans residues 13–90 (SSSSSASSPA…TSAPGMTKSH (78 aa)). Ser-46 carries the post-translational modification Phosphoserine; by GSK3-beta. The nuclear receptor DNA-binding region spans 100–176 (VLLCKVCGDV…VGMSRDAVRF (77 aa)). NR C4-type zinc fingers lie at residues 103-123 (CKVCGDVASGFHYGVHACEGC) and 140-164 (CLKNENCSIMRMNRNRCQQCRFKKC). Lys-162 and Lys-163 each carry N6-acetyllysine; by KAT5. Disordered stretches follow at residues 215–246 (QHDQSALPAQEQLRPKSQLEQENIKNTPSDFA) and 263–282 (LYNQEHRENSSESMPPQRGE). 2 stretches are compositionally biased toward basic and acidic residues: residues 227-237 (LRPKSQLEQEN) and 263-272 (LYNQEHRENS). 2 cysteine pairs are disulfide-bonded: Cys-334–Cys-340 and Cys-371–Cys-381. An NR LBD domain is found at 366-576 (RNSYLCNTGG…EELLAFKVHP (211 aa)). Residues Cys-381 and His-565 each coordinate heme. The segment at 394-576 (SGHEIWEEFS…EELLAFKVHP (183 aa)) is interaction with ZNHIT1.

The protein belongs to the nuclear hormone receptor family. NR1 subfamily. In terms of assembly, binds DNA as a monomer or a homodimer. Interacts with NCOA5 coactivator, leading to a strong increase of transcription of target genes. Interacts (via N-terminus) with KAT5. Interacts (via C-terminus) with HDAC1. Interacts with ZNHIT1. Interacts with SIAH2. Deacetylated by HDAC1. Acetylation and deacetylation regulate its transcriptional regulatory activity. In terms of processing, under more reducing intracellular redox conditions, Cys-381 is in its heme-bound state, which is optimal for recruitment of the NCOR1/HDAC3 corepressor complex and repression of target genes. When subjected to oxidative stress conditions, Cys-381 undergoes oxidation to form a disulfide bridge with Cys-371, also triggering a ligand switch that results in release of bound heme and derepression of target genes. Post-translationally, ubiquitinated by SIAH2; leading to its proteasomal degradation. Phosphorylated by CSNK1E; phosphorylation enhances its cytoplasmic localization. As to expression, ubiquitous. Expressed abundantly in skeletal muscle and brown adipose tissue. Expressed during skeletal muscle myogenesis.

The protein resides in the nucleus. The protein localises to the cytoplasm. The heme-bound form can bind gaseous signaling molecules such as CO and nitric oxide (NO) and NO can reverse its transcriptional repressor activity. Functionally, transcriptional repressor which coordinates circadian rhythm and metabolic pathways in a heme-dependent manner. Integral component of the complex transcription machinery that governs circadian rhythmicity and forms a critical negative limb of the circadian clock by directly repressing the expression of core clock components BMAL1 and CLOCK. Also regulates genes involved in metabolic functions, including lipid metabolism and the inflammatory response. Acts as a receptor for heme which stimulates its interaction with the NCOR1/HDAC3 corepressor complex, enhancing transcriptional repression. Recognizes two classes of DNA response elements within the promoter of its target genes and can bind to DNA as either monomers or homodimers, depending on the nature of the response element. Binds as a monomer to a response element composed of the consensus half-site motif 5'-[A/G]GGTCA-3' preceded by an A/T-rich 5' sequence (RevRE), or as a homodimer to a direct repeat of the core motif spaced by two nuclegotides (RevDR-2). Acts as a potent competitive repressor of ROR alpha (RORA) function and also negatively regulates the expression of NR1D1. Regulates lipid and energy homeostasis in the skeletal muscle via repression of genes involved in lipid metabolism and myogenesis including: CD36, FABP3, FABP4, UCP3, SCD1 and MSTN. Regulates hepatic lipid metabolism via the repression of APOC3. Represses gene expression at a distance in macrophages by inhibiting the transcription of enhancer-derived RNAs (eRNAs). In addition to its activity as a repressor, can also act as a transcriptional activator. Acts as a transcriptional activator of the sterol regulatory element-binding protein 1 (SREBF1) and the inflammatory mediator interleukin-6 (IL6) in the skeletal muscle. Plays a role in the regulation of circadian sleep/wake cycle; essential for maintaining wakefulness during the dark phase or active period. Key regulator of skeletal muscle mitochondrial function; negatively regulates the skeletal muscle expression of core clock genes and genes involved in mitochondrial biogenesis, fatty acid beta-oxidation and lipid metabolism. May play a role in the circadian control of neutrophilic inflammation in the lung. The protein is Nuclear receptor subfamily 1 group D member 2 of Mus musculus (Mouse).